The sequence spans 342 residues: Global transcription regulator FGP1 (342 aa).

The disordered stretch occupies residues 91–113 (FSPGEKKRASKKPKKQAGVAKAY).

It belongs to the MIT1/WOR1 family.

The protein resides in the nucleus. In terms of biological role, global transcriptional regulator of pathogenicity. Regulates many genes during growth in putrescine medium and during infection. Involved in the developmental processes of conidium formation and sexual reproduction and modulates a morphological change that accompanies mycotoxin production. The polypeptide is Global transcription regulator FGP1 (Gibberella zeae (strain ATCC MYA-4620 / CBS 123657 / FGSC 9075 / NRRL 31084 / PH-1) (Wheat head blight fungus)).